A 278-amino-acid polypeptide reads, in one-letter code: Type II restriction enzyme AgeI (278 aa).

This sequence belongs to the BsaWI type II restriction endonuclease family.

The enzyme catalyses Endonucleolytic cleavage of DNA to give specific double-stranded fragments with terminal 5'-phosphates.. A P subtype restriction enzyme that recognizes the double-stranded sequence 5'-ACCGGT-3' and cleaves after A-1. The protein is Type II restriction enzyme AgeI (ageIR) of Thalassovita gelatinovora (Thalassobius gelatinovorus).